The following is a 377-amino-acid chain: DNA dC-&gt;dU-editing enzyme APOBEC-3G (377 aa).

An essential for cytoplasmic localization region spans residues 1–60; that stretch reads MNPQIRNMVEQMEPDIFVYYFNNRPILSGRNTVWLCYEVKTKDPSGPPLDANIFQGKLYP. CMP/dCMP-type deaminase domains lie at 29-138 and 214-327; these read GRNT…LRIL and GQRE…LRTL. Residue T32 is modified to Phosphothreonine; by PKA. Residues H65, C97, and C100 each contribute to the Zn(2+) site. Positions 209–335 are necessary for homooligomerization; the sequence is KPWVSGQRET…TLHRDGAKIA (127 aa). Residues 213-215 are interaction with DNA; sequence SGQ. T218 carries the post-translational modification Phosphothreonine; by PKA and CAMK2. H257 lines the Zn(2+) pocket. The active-site Proton donor is E259. Residues C287 and C290 each coordinate Zn(2+). Residues 312 to 319 are interaction with DNA; the sequence is RIYDDQGR.

Belongs to the cytidine and deoxycytidylate deaminase family. In terms of assembly, homodimer. Homooligomer. Can bind RNA to form ribonucleoprotein complexes of high-molecular-mass (HMM) or low-molecular-mass (LMM). HMM is inactive and heterogeneous in protein composition because of binding nonselectively to cellular RNAs, which in turn are associated with variety of cellular proteins. The LMM form which is enzymatically active has few or no RNAs associated. Its ability to form homooligomer is distinct from its ability to assemble into HMM. Interacts with APOBEC3B, APOBEC3F, MOV10, AGO2, EIF4E, EIF4ENIF1, DCP2 and DDX6 in an RNA-dependent manner. Interacts with AGO1, AGO3 and PKA/PRKACA. Zn(2+) serves as cofactor.

The protein localises to the cytoplasm. It localises to the nucleus. The protein resides in the P-body. It carries out the reaction a 2'-deoxycytidine in single-stranded DNA + H2O + H(+) = a 2'-deoxyuridine in single-stranded DNA + NH4(+). Its function is as follows. DNA deaminase (cytidine deaminase) which acts as an inhibitor of retrovirus replication and retrotransposon mobility via deaminase-dependent and -independent mechanisms. Exhibits antiviral activity against vif-deficient: HIV-1 and simian immunodeficiency viruses (SIVs) and also simian foamy virus (SFV). After the penetration of retroviral nucleocapsids into target cells of infection and the initiation of reverse transcription, it can induce the conversion of cytosine to uracil in the minus-sense single-strand viral DNA, leading to G-to-A hypermutations in the subsequent plus-strand viral DNA. The resultant detrimental levels of mutations in the proviral genome, along with a deamination-independent mechanism that works prior to the proviral integration, together exert efficient antiretroviral effects in infected target cells. Selectively targets single-stranded DNA and does not deaminate double-stranded DNA or single- or double-stranded RNA. May inhibit the mobility of LTR retrotransposons. The polypeptide is DNA dC-&gt;dU-editing enzyme APOBEC-3G (APOBEC3G) (Chlorocebus aethiops (Green monkey)).